Reading from the N-terminus, the 382-residue chain is Mannitol-1-phosphate 5-dehydrogenase (382 aa).

NAD(+) is bound at residue 3-14; that stretch reads ALHFGAGNIGRG. An N6-acetyllysine modification is found at Lys-269.

This sequence belongs to the mannitol dehydrogenase family.

It catalyses the reaction D-mannitol 1-phosphate + NAD(+) = beta-D-fructose 6-phosphate + NADH + H(+). The chain is Mannitol-1-phosphate 5-dehydrogenase from Escherichia coli O139:H28 (strain E24377A / ETEC).